The primary structure comprises 159 residues: Protransforming growth factor alpha (159 aa).

The first 23 residues, Met1 to Leu23, serve as a signal peptide directing secretion. The propeptide at Glu24–Ala38 is removed in mature form. The Extracellular segment spans residues Glu24 to Gln97. Asn25 is a glycosylation site (N-linked (GlcNAc...) asparagine). An EGF-like domain is found at His42–Glu82. 3 disulfide bridges follow: Cys46-Cys59, Cys54-Cys70, and Cys72-Cys81. A propeptide spans Val89–Val159 (removed in mature form). The chain crosses the membrane as a helical span at residues Ala98–Cys123. Over Gln124 to Val159 the chain is Cytoplasmic. 2 S-palmitoyl cysteine lipidation sites follow: Cys152 and Cys153.

Interacts with the PDZ domains of MAGI3, SDCBP and SNTA1. The interaction with SDCBP, is required for the targeting to the cell surface. In the endoplasmic reticulum, in its immature form (i.e. with a prosegment and lacking full N-glycosylation), interacts with CNIH. In the Golgi apparatus, may form a complex with CNIH and GORASP2. Interacts (via cytoplasmic C-terminal domain) with NKD2.

It localises to the secreted. It is found in the extracellular space. The protein localises to the cell membrane. TGF alpha is a mitogenic polypeptide that is able to bind to the EGF receptor/EGFR and to act synergistically with TGF beta to promote anchorage-independent cell proliferation in soft agar. The polypeptide is Protransforming growth factor alpha (Tgfa) (Rattus norvegicus (Rat)).